Here is a 238-residue protein sequence, read N- to C-terminus: Protein LicA homolog (238 aa).

The protein belongs to the peptidase S49 family.

The chain is Protein LicA homolog (licA) from Mycoplasma capricolum subsp. capricolum (strain California kid / ATCC 27343 / NCTC 10154).